The following is a 608-amino-acid chain: Extracellular metalloproteinase 5 (608 aa).

Residues 1-20 form the signal peptide; it reads MHGLLLAAAGLLSLPLHVIA. The propeptide occupies 21–244; it reads HPQPSTNLAG…VHNVVDYVSH (224 aa). N-linked (GlcNAc...) asparagine glycosylation is present at Asn-285. His-427 serves as a coordination point for Zn(2+). Residue Glu-428 is part of the active site. Residue His-431 participates in Zn(2+) binding. N-linked (GlcNAc...) asparagine glycosylation is present at Asn-591.

The protein belongs to the peptidase M36 family. Requires Zn(2+) as cofactor.

The protein localises to the secreted. Its function is as follows. Secreted metalloproteinase probably acting as a virulence factor. The polypeptide is Extracellular metalloproteinase 5 (MEP5) (Trichophyton tonsurans (Scalp ringworm fungus)).